Consider the following 247-residue polypeptide: MPRYRLTVEYDGSDYVGWQRQDNGPSVQGAIEKAVLSLTRETVSIRGAGRTDSGVHARGQVAHLDLTREWKSYTLQNALNAHLALAGERVSILDVAEAPGDFDARFSAIRRHYLYRIISRRSPLALEARRAWWVPKPLDHDAMHEAAQRLVGHHDFTTFRSAHCQATSPLRTLDRLDVTRAGELIEIRATAQSFLHNQIRSFAGSLKLVGEGKWTPDDLQAALEARDRKACGPVAPPDGLYFMRVDY.

The active-site Nucleophile is the Asp-52. Tyr-113 contacts substrate.

It belongs to the tRNA pseudouridine synthase TruA family. As to quaternary structure, homodimer.

It catalyses the reaction uridine(38/39/40) in tRNA = pseudouridine(38/39/40) in tRNA. Formation of pseudouridine at positions 38, 39 and 40 in the anticodon stem and loop of transfer RNAs. The protein is tRNA pseudouridine synthase A of Rhizobium meliloti (strain 1021) (Ensifer meliloti).